We begin with the raw amino-acid sequence, 567 residues long: Malate synthase (567 aa).

The active-site Proton acceptor is Arg177. Asp466 functions as the Proton donor in the catalytic mechanism. The Microbody targeting signal signature appears at 565–567; that stretch reads CKL.

Belongs to the malate synthase family.

The protein localises to the glyoxysome. It carries out the reaction glyoxylate + acetyl-CoA + H2O = (S)-malate + CoA + H(+). It participates in carbohydrate metabolism; glyoxylate cycle; (S)-malate from isocitrate: step 2/2. In Oryza sativa subsp. japonica (Rice), this protein is Malate synthase.